The chain runs to 245 residues: tRNA (guanine-N(7)-)-methyltransferase (245 aa).

S-adenosyl-L-methionine is bound by residues glutamate 75, glutamate 100, aspartate 127, and aspartate 149. Aspartate 149 is an active-site residue. Residues lysine 153, aspartate 185, and 222–225 (TKFE) each bind substrate.

Belongs to the class I-like SAM-binding methyltransferase superfamily. TrmB family.

It carries out the reaction guanosine(46) in tRNA + S-adenosyl-L-methionine = N(7)-methylguanosine(46) in tRNA + S-adenosyl-L-homocysteine. It functions in the pathway tRNA modification; N(7)-methylguanine-tRNA biosynthesis. In terms of biological role, catalyzes the formation of N(7)-methylguanine at position 46 (m7G46) in tRNA. The protein is tRNA (guanine-N(7)-)-methyltransferase of Acinetobacter baylyi (strain ATCC 33305 / BD413 / ADP1).